A 341-amino-acid chain; its full sequence is Glyceraldehyde-3-phosphate dehydrogenase 2 (341 aa).

Residues 12 to 13 (RI), Arg78, and Thr120 contribute to the NAD(+) site. D-glyceraldehyde 3-phosphate contacts are provided by residues 152–154 (SCT) and Thr183. Cys153 functions as the Nucleophile in the catalytic mechanism. Residue Asn184 coordinates NAD(+). D-glyceraldehyde 3-phosphate is bound by residues Arg198, 211-212 (TG), and Arg234. Asn313 provides a ligand contact to NAD(+).

It belongs to the glyceraldehyde-3-phosphate dehydrogenase family. Homotetramer.

The protein resides in the cytoplasm. The enzyme catalyses D-glyceraldehyde 3-phosphate + phosphate + NAD(+) = (2R)-3-phospho-glyceroyl phosphate + NADH + H(+). Its pathway is carbohydrate degradation; glycolysis; pyruvate from D-glyceraldehyde 3-phosphate: step 1/5. Functionally, catalyzes the oxidative phosphorylation of glyceraldehyde 3-phosphate (G3P) to 1,3-bisphosphoglycerate (BPG) using the cofactor NAD. The first reaction step involves the formation of a hemiacetal intermediate between G3P and a cysteine residue, and this hemiacetal intermediate is then oxidized to a thioester, with concomitant reduction of NAD to NADH. The reduced NADH is then exchanged with the second NAD, and the thioester is attacked by a nucleophilic inorganic phosphate to produce BPG. This chain is Glyceraldehyde-3-phosphate dehydrogenase 2 (gapA2), found in Staphylococcus epidermidis (strain ATCC 12228 / FDA PCI 1200).